Reading from the N-terminus, the 60-residue chain is Antitoxin Dmd (60 aa).

As to quaternary structure, can form a complex with non-cognate host toxins LsoA and RnlA.

Its function is as follows. Antitoxin component of a potential type II toxin-antitoxin (TA) system. Acts as an antitoxin against host toxins RnlA and LsoA, preventing them from degrading T4 bacteriophage-derived mRNA and thus permitting successful virus infection. Stabilizes middle (8-10 minutes) and late (18 to 28 minutes) T4 gene transcripts. This is Antitoxin Dmd (dmd) from Escherichia coli (Bacteriophage T4).